Reading from the N-terminus, the 229-residue chain is MLVNALQEKLGYIFNRYDLLLQALTHRSSSNQHNERLEFLGDAILNYVIANLLYHRFPHISEGGMSRMRANLVRENTLATLAREFNLGDYLQLGQGELKSGGYQRESILANTIEALIGGIFLDSNIQTIEILIINWYKIRIDHMDPYASYDTQKDPKTRLQEYMQRRRLPLPVYWINQIIGEAHNQIFTINCQVSELTQPIIGCGSSRRRAEQNAAAKVLEALEHNQNI.

The region spanning 3–125 (VNALQEKLGY…LIGGIFLDSN (123 aa)) is the RNase III domain. Glu-38 lines the Mg(2+) pocket. The active site involves Asp-42. The Mg(2+) site is built by Asn-111 and Glu-114. Glu-114 is a catalytic residue. One can recognise a DRBM domain in the interval 155–225 (DPKTRLQEYM…AAKVLEALEH (71 aa)).

Belongs to the ribonuclease III family. Homodimer. Mg(2+) is required as a cofactor.

The protein resides in the cytoplasm. It catalyses the reaction Endonucleolytic cleavage to 5'-phosphomonoester.. Functionally, digests double-stranded RNA. Involved in the processing of primary rRNA transcript to yield the immediate precursors to the large and small rRNAs (23S and 16S). Processes some mRNAs, and tRNAs when they are encoded in the rRNA operon. Processes pre-crRNA and tracrRNA of type II CRISPR loci if present in the organism. This chain is Ribonuclease 3, found in Blochmanniella pennsylvanica (strain BPEN).